A 520-amino-acid chain; its full sequence is Sodium-dependent dicarboxylate transporter SdcS (520 aa).

14 consecutive transmembrane segments (helical) span residues 30-50 (AGQL…LLFF), 55-75 (LPWK…WWIT), 77-97 (AIPI…GHIL), 104-124 (SEYG…AIAM), 160-180 (SMFV…LAII), 207-227 (IGYA…PLII), 242-262 (FAKW…ITWL), 298-318 (KVVQ…EFLL), 323-343 (VTSS…LFVI), 362-382 (ELPW…KGIS), 399-419 (GVSP…LTEV), 428-448 (MILP…LLLM), 452-472 (AMAA…AIIF), and 491-511 (LISA…VLGI).

Belongs to the SLC13A/DASS transporter (TC 2.A.47) family. NADC subfamily.

It is found in the cell membrane. Its function is as follows. Mediates the transport of the dicarboxylates fumarate, malate, and succinate across the cytoplasmic membrane via a Na(+)-electrochemical gradient. The protein is Sodium-dependent dicarboxylate transporter SdcS (sdcS) of Staphylococcus aureus (strain MSSA476).